We begin with the raw amino-acid sequence, 1818 residues long: U3 small nucleolar RNA-associated protein 10 (1818 aa).

The helical transmembrane segment at 568-588 (TDFYLLIPLILLALFDNSKLI) threads the bilayer. An HEAT repeat occupies 1778–1816 (LVPYIAELLEDDDEEVEMEVRRGLVRVIENVLGEPLDRY).

Belongs to the HEATR1/UTP10 family. In terms of assembly, component of the ribosomal small subunit (SSU) processome.

Its subcellular location is the nucleus. It is found in the nucleolus. The protein localises to the membrane. In terms of biological role, involved in nucleolar processing of pre-18S ribosomal RNA. Involved in ribosome biosynthesis. This Candida albicans (strain SC5314 / ATCC MYA-2876) (Yeast) protein is U3 small nucleolar RNA-associated protein 10.